The chain runs to 253 residues: Imidazole glycerol phosphate synthase subunit HisF (253 aa).

Catalysis depends on residues Asp-11 and Asp-130.

It belongs to the HisA/HisF family. As to quaternary structure, heterodimer of HisH and HisF.

The protein localises to the cytoplasm. It carries out the reaction 5-[(5-phospho-1-deoxy-D-ribulos-1-ylimino)methylamino]-1-(5-phospho-beta-D-ribosyl)imidazole-4-carboxamide + L-glutamine = D-erythro-1-(imidazol-4-yl)glycerol 3-phosphate + 5-amino-1-(5-phospho-beta-D-ribosyl)imidazole-4-carboxamide + L-glutamate + H(+). The protein operates within amino-acid biosynthesis; L-histidine biosynthesis; L-histidine from 5-phospho-alpha-D-ribose 1-diphosphate: step 5/9. Its function is as follows. IGPS catalyzes the conversion of PRFAR and glutamine to IGP, AICAR and glutamate. The HisF subunit catalyzes the cyclization activity that produces IGP and AICAR from PRFAR using the ammonia provided by the HisH subunit. In Geotalea uraniireducens (strain Rf4) (Geobacter uraniireducens), this protein is Imidazole glycerol phosphate synthase subunit HisF.